The sequence spans 337 residues: Equatorin (337 aa).

The N-terminal stretch at 1–20 (MDFILLIILSGVFLPDIISL) is a signal peptide. Over 21 to 183 (QPIVGQEPGV…LSELEEIKLK (163 aa)) the chain is Lumenal. The tract at residues 110–130 (SKPTASGEEEKPSESSRKTST) is disordered. The span at 117-126 (EEEKPSESSR) shows a compositional bias: basic and acidic residues. N-linked (GlcNAc...) asparagine glycosylation occurs at Asn145. A helical membrane pass occupies residues 184–204 (LMLGISLMTLVLLIPLLIFCF). Topologically, residues 205 to 337 (ATLYKLRHLR…LLNKEGSPSN (133 aa)) are cytoplasmic. Residues 259–283 (SSEMRRSRTRRSKSKPMDFSAGSNQ) are disordered. Ser336 is subject to Phosphoserine.

In terms of assembly, interacts with SNAP25. Highly N- and O-glycosylated; contains sialic acid. MN9 epitope is O-glycosylated. As to expression, sperm specific, including germ cells (at protein level).

The protein localises to the cytoplasmic vesicle. It is found in the secretory vesicle. Its subcellular location is the acrosome membrane. It localises to the acrosome inner membrane. The protein resides in the acrosome outer membrane. The protein localises to the nucleus. It is found in the cytoplasm. Functionally, acrosomal membrane-anchored protein involved in the process of fertilization and in acrosome biogenesis. This Mus musculus (Mouse) protein is Equatorin (Eqtn).